We begin with the raw amino-acid sequence, 32 residues long: Enolase (32 aa).

This sequence belongs to the enolase family. In terms of assembly, homodimer. Mg(2+) serves as cofactor.

It is found in the cytoplasm. The enzyme catalyses (2R)-2-phosphoglycerate = phosphoenolpyruvate + H2O. Its pathway is carbohydrate degradation; glycolysis; pyruvate from D-glyceraldehyde 3-phosphate: step 4/5. This is Enolase from Imperata cylindrica (Cogon grass).